The primary structure comprises 256 residues: Photosystem I chlorophyll a/b-binding protein 5, chloroplastic (256 aa).

The transit peptide at M1–K32 directs the protein to the chloroplast. A33 carries the N-acetylalanine modification. Residue W49 participates in chlorophyll b binding. F69 and E88 together coordinate chlorophyll a. A chlorophyll b-binding site is contributed by R93. Helical transmembrane passes span F94–I113 and F129–A146. Residues E147 and R150 each coordinate chlorophyll b. Chlorophyll a-binding residues include K205, E206, N209, R211, Q223, and H238. A helical transmembrane segment spans residues L212–I232.

It belongs to the light-harvesting chlorophyll a/b-binding (LHC) protein family. As to quaternary structure, the LHC complex consists of chlorophyll a-b binding proteins. Homodimer. Heterodimer with LHCA2 and, possibly, LHCA3. Can substitute to LHCA4 to form a complex with LHCA1. Binds pigments. Element of the NAD(P)H dehydrogenase-photosystem I supercomplex (NDH-PSI). Binds at least 14 chlorophylls (8 Chl-a and 6 Chl-b) and carotenoids such as lutein and neoxanthin. is required as a cofactor. In terms of processing, photoregulated by reversible phosphorylation of its threonine residues.

The protein resides in the plastid. The protein localises to the chloroplast thylakoid membrane. In terms of biological role, the light-harvesting complex (LHC) functions as a light receptor, it captures and delivers excitation energy to photosystems with which it is closely associated. Seems involved in the function of the photosystem I in low light conditions, when other LHCA proteins are less abundant. Required, together with LHCA6, for the formation of a full-size NAD(P)H dehydrogenase-photosystem I supercomplex (NDH-PSI) that triggers cyclic and chlororespiratory electron transport in chloroplast thylakoids, especially under stress conditions (e.g. increased light intensity). This chain is Photosystem I chlorophyll a/b-binding protein 5, chloroplastic, found in Arabidopsis thaliana (Mouse-ear cress).